The sequence spans 159 residues: Phosphopantetheine adenylyltransferase (159 aa).

Threonine 10 lines the substrate pocket. ATP is bound by residues 10–11 (TF) and histidine 18. Substrate-binding residues include lysine 42, leucine 73, and arginine 87. Residues 88 to 90 (GLR), glutamate 98, and 123 to 129 (YSYVSGT) each bind ATP.

Belongs to the bacterial CoaD family. Homohexamer. It depends on Mg(2+) as a cofactor.

It localises to the cytoplasm. It carries out the reaction (R)-4'-phosphopantetheine + ATP + H(+) = 3'-dephospho-CoA + diphosphate. Its pathway is cofactor biosynthesis; coenzyme A biosynthesis; CoA from (R)-pantothenate: step 4/5. In terms of biological role, reversibly transfers an adenylyl group from ATP to 4'-phosphopantetheine, yielding dephospho-CoA (dPCoA) and pyrophosphate. This chain is Phosphopantetheine adenylyltransferase, found in Coxiella burnetii (strain CbuK_Q154) (Coxiella burnetii (strain Q154)).